The primary structure comprises 174 residues: MTSSLPESIDGLYRFSSSRGSVVSTHLGGRFPSINPDTLWSKLNECDKCVFFRNMVSKSLYATDYNNANTDVKTIFVPRDSRNNFFNIQNEITPNDFVSSLTIPGQLFIMPKSSPINIKVQNKNKEYLSINIKNVNKGGQAFVQVLDRLWIIVVPNIMCTNGIIHLMEEVYAFD.

Residues 36-171 form the FAS1 domain; it reads PDTLWSKLNE…GIIHLMEEVY (136 aa).

This chain is Putative FAS1 domain-containing protein 096L, found in Acheta domesticus (House cricket).